Consider the following 513-residue polypeptide: Ribonuclease Y (513 aa).

Residues 4-24 (TTSLIIAILAGILGIVIGFFF) form a helical membrane-spanning segment. Positions 78–106 (KSRLKEISRQEDRLNSKEENLERKNASLE) are disordered. Residues 203–288 (TVSVVNLPND…EMVEKARKDV (86 aa)) enclose the KH domain. Residues 329–422 (VLKHSIEVSN…VQSADAISAA (94 aa)) form the HD domain.

It belongs to the RNase Y family.

It localises to the cell membrane. Functionally, endoribonuclease that initiates mRNA decay. The chain is Ribonuclease Y from Finegoldia magna (strain ATCC 29328 / DSM 20472 / WAL 2508) (Peptostreptococcus magnus).